Consider the following 209-residue polypeptide: Thymidylate kinase (209 aa).

ATP is bound at residue 10–17 (GLDGAGKS).

The protein belongs to the thymidylate kinase family.

The catalysed reaction is dTMP + ATP = dTDP + ADP. Its function is as follows. Phosphorylation of dTMP to form dTDP in both de novo and salvage pathways of dTTP synthesis. This Francisella tularensis subsp. novicida (strain U112) protein is Thymidylate kinase.